The following is a 417-amino-acid chain: NADH-quinone oxidoreductase subunit D (417 aa).

Belongs to the complex I 49 kDa subunit family. As to quaternary structure, NDH-1 is composed of 14 different subunits. Subunits NuoB, C, D, E, F, and G constitute the peripheral sector of the complex.

It localises to the cell inner membrane. It catalyses the reaction a quinone + NADH + 5 H(+)(in) = a quinol + NAD(+) + 4 H(+)(out). In terms of biological role, NDH-1 shuttles electrons from NADH, via FMN and iron-sulfur (Fe-S) centers, to quinones in the respiratory chain. The immediate electron acceptor for the enzyme in this species is believed to be ubiquinone. Couples the redox reaction to proton translocation (for every two electrons transferred, four hydrogen ions are translocated across the cytoplasmic membrane), and thus conserves the redox energy in a proton gradient. This is NADH-quinone oxidoreductase subunit D from Coxiella burnetii (strain CbuG_Q212) (Coxiella burnetii (strain Q212)).